A 317-amino-acid chain; its full sequence is Beta-ketoacyl-[acyl-carrier-protein] synthase III (317 aa).

Residues cysteine 112 and histidine 244 contribute to the active site. An ACP-binding region spans residues 245 to 249 (QANLR). Asparagine 274 is an active-site residue.

This sequence belongs to the thiolase-like superfamily. FabH family. In terms of assembly, homodimer.

The protein localises to the cytoplasm. It carries out the reaction malonyl-[ACP] + acetyl-CoA + H(+) = 3-oxobutanoyl-[ACP] + CO2 + CoA. The protein operates within lipid metabolism; fatty acid biosynthesis. Its function is as follows. Catalyzes the condensation reaction of fatty acid synthesis by the addition to an acyl acceptor of two carbons from malonyl-ACP. Catalyzes the first condensation reaction which initiates fatty acid synthesis and may therefore play a role in governing the total rate of fatty acid production. Possesses both acetoacetyl-ACP synthase and acetyl transacylase activities. Its substrate specificity determines the biosynthesis of branched-chain and/or straight-chain of fatty acids. This Aliivibrio fischeri (strain ATCC 700601 / ES114) (Vibrio fischeri) protein is Beta-ketoacyl-[acyl-carrier-protein] synthase III.